Here is a 1461-residue protein sequence, read N- to C-terminus: Neogenin (1461 aa).

The N-terminal stretch at 1–33 is a signal peptide; sequence MAAERGARRLLSTPSFWLYCLLLLGRRAPGAAA. Over 34–1105 the chain is Extracellular; sequence ARSGSAPQSP…PTSPLDSNML (1072 aa). 4 Ig-like C2-type domains span residues 52–141, 152–238, 243–336, and 341–426; these read PFYF…TIIS, PRFT…VELK, PEVI…AELT, and PEFL…AQLI. Asn73 is a glycosylation site (N-linked (GlcNAc...) asparagine). 3 disulfide bridges follow: Cys74–Cys129, Cys173–Cys221, and Cys270–Cys320. N-linked (GlcNAc...) asparagine glycosylation occurs at Asn210. N-linked (GlcNAc...) asparagine glycosylation occurs at Asn326. Cys362 and Cys410 are joined by a disulfide. 6 Fibronectin type-III domains span residues 441 to 535, 541 to 631, 636 to 731, 741 to 831, 856 to 952, and 957 to 1054; these read APRD…TQPE, PAPN…TLSD, APQN…TFES, VPSS…RPHT, PPVG…TFEL, and PPKD…TPKA. Residues Asn470 and Asn489 are each glycosylated (N-linked (GlcNAc...) asparagine). N-linked (GlcNAc...) asparagine glycans are attached at residues Asn639 and Asn715. Residue Asn909 is glycosylated (N-linked (GlcNAc...) asparagine). Positions 1041 to 1097 are disordered; it reads GPMSEAVQFRTPKADSSDKMPNDQASGSGGKGSRLPDLGSDYKPPMSGSNSPHGSPT. Residues 1052–1061 show a composition bias toward basic and acidic residues; it reads PKADSSDKMP. The segment covering 1087 to 1097 has biased composition (polar residues); it reads SGSNSPHGSPT. Residues 1106–1126 traverse the membrane as a helical segment; it reads LVIIVSVGVITIVVVVIIAVF. Residues 1127–1461 lie on the Cytoplasmic side of the membrane; sequence CTRRTTSHQK…MKDLNAITTA (335 aa). Disordered regions lie at residues 1138 to 1160, 1174 to 1206, 1235 to 1276, and 1289 to 1381; these read KRAA…DVKP, PIDK…SMDS, PKMM…PARS, and TSMS…ALPS. Ser1178 and Ser1194 each carry phosphoserine. A compositionally biased stretch (polar residues) spans 1191 to 1206; that stretch reads PRNSQDITPVDNSMDS. Thr1198 carries the post-translational modification Phosphothreonine. Composition is skewed to polar residues over residues 1289–1322 and 1330–1349; these read TSMS…TCCT and ATSS…QSLP. The segment covering 1366–1375 has biased composition (pro residues); sequence AIPPPGPPTY. Position 1401 is a phosphoserine (Ser1401). The residue at position 1404 (Thr1404) is a Phosphothreonine. Phosphoserine occurs at positions 1432, 1434, and 1435.

Belongs to the immunoglobulin superfamily. DCC family. In terms of assembly, interacts with MYO10. Interacts with RGMA and RGMB. Interacts with BMP2, BMP4, BMP6, and BMP7. Widely expressed and also in cancer cell lines.

It localises to the cell membrane. Functionally, multi-functional cell surface receptor regulating cell adhesion in many diverse developmental processes, including neural tube and mammary gland formation, myogenesis and angiogenesis. Receptor for members of the BMP, netrin, and repulsive guidance molecule (RGM) families. Netrin-Neogenin interactions result in a chemoattractive axon guidance response and cell-cell adhesion, the interaction between NEO1/Neogenin and RGMa and RGMb induces a chemorepulsive response. This is Neogenin (NEO1) from Homo sapiens (Human).